Here is a 336-residue protein sequence, read N- to C-terminus: Shematrin-like protein 1 (336 aa).

The signal sequence occupies residues 1–16 (MLRFIAIVALIATVNA).

As to expression, prismatic layer of shell (at protein level). Expressed primarily in the mantle with highest level in the mantle edge and lower level in the mantle pallium.

Its subcellular location is the secreted. This chain is Shematrin-like protein 1, found in Pinctada maxima (Silver-lipped pearl oyster).